Reading from the N-terminus, the 181-residue chain is ADP-ribosylation factor 1 (181 aa).

Glycine 2 is lipidated: N-myristoyl glycine. GTP is bound by residues 24–31 (GLDAAGKT), 67–71 (DVGGQ), and 126–129 (NKQD).

This sequence belongs to the small GTPase superfamily. Arf family. In terms of tissue distribution, seedling shoots.

It localises to the golgi apparatus. The enzyme catalyses GTP + H2O = GDP + phosphate + H(+). GTP-binding protein involved in protein trafficking; may modulate vesicle budding and uncoating within the Golgi apparatus. The protein is ADP-ribosylation factor 1 of Oryza sativa subsp. japonica (Rice).